Reading from the N-terminus, the 236-residue chain is Probable methylthioribulose-1-phosphate dehydratase (236 aa).

Residues 1 to 29 (MQNVQQPKKRKLSDEIIAEDEDYQRDPEH) form a disordered region. A substrate-binding site is contributed by Cys-103. Residues His-121, His-123, and His-201 each coordinate Zn(2+).

Belongs to the aldolase class II family. MtnB subfamily. Zn(2+) serves as cofactor.

It localises to the cytoplasm. The enzyme catalyses 5-(methylsulfanyl)-D-ribulose 1-phosphate = 5-methylsulfanyl-2,3-dioxopentyl phosphate + H2O. The protein operates within amino-acid biosynthesis; L-methionine biosynthesis via salvage pathway; L-methionine from S-methyl-5-thio-alpha-D-ribose 1-phosphate: step 2/6. In terms of biological role, catalyzes the dehydration of methylthioribulose-1-phosphate (MTRu-1-P) into 2,3-diketo-5-methylthiopentyl-1-phosphate (DK-MTP-1-P). The chain is Probable methylthioribulose-1-phosphate dehydratase from Trichoplax adhaerens (Trichoplax reptans).